We begin with the raw amino-acid sequence, 78 residues long: Cytochrome c oxidase subunit 6b-3 (78 aa).

The CHCH domain occupies 22 to 65 (TRHCFTRYIEFHRCTTAKGEDANECERFAKYYRALCPGEWVDKW). The Cx9C motif signature appears at 25-35 (CFTRYIEFHRC). 2 disulfides stabilise this stretch: Cys25–Cys57 and Cys35–Cys46. The short motif at 46–57 (CERFAKYYRALC) is the Cx10C motif element.

It belongs to the cytochrome c oxidase subunit 6B (TC 3.D.4.8) family. In terms of tissue distribution, expressed in the whole plant.

It is found in the mitochondrion. Its function is as follows. This protein is one of the nuclear-coded polypeptide chains of cytochrome c oxidase, the terminal oxidase in mitochondrial electron transport. This protein may be one of the heme-binding subunits of the oxidase. The protein is Cytochrome c oxidase subunit 6b-3 (COX6B-3) of Arabidopsis thaliana (Mouse-ear cress).